We begin with the raw amino-acid sequence, 408 residues long: MSLFSCAIKRYKEGNLILQICIGIVLGILIGIFSKDLAIFANIFGALFTGALKAIAPILVFILILTTICTKEFNHGSEKIKHIIFLYIFGTFLASLSAVSISFIFPVELVLTDIEKASTTSPAHIGEVFKTLLFQIVDNPIHALSSGNYLSILAWAIGGGFALRHCSNDAKQLFTDINEGVLKIVKFIVKLAPFGIFGLVANSVAQTGAAGLLSYIKLLIILVLTMFFVAFVINALIVFAYTKKNPYPLIFICLKHSAVFAFFTRSSAANIPVNMALCSKLNINNSLYSISIPLGATINMAGAAVTIAILSLAAAHTVGIEINFLQAMLLSVLAAFAACGASGVAGGSLLLIPLACSLFNIDYDIAMQVVAVGFIIGVIQDSVETALNSSTDVLFSAICSDNELNLKI.

The next 9 helical transmembrane spans lie at 14 to 34 (GNLILQICIGIVLGILIGIFS), 43 to 63 (IFGALFTGALKAIAPILVFIL), 83 to 103 (IIFLYIFGTFLASLSAVSISF), 143 to 163 (ALSSGNYLSILAWAIGGGFAL), 181 to 201 (VLKIVKFIVKLAPFGIFGLVA), 219 to 239 (LIILVLTMFFVAFVINALIVF), 247 to 269 (YPLIFICLKHSAVFAFFTRSSAA), 290 to 310 (ISIPLGATINMAGAAVTIAIL), and 332 to 352 (VLAAFAACGASGVAGGSLLLI).

The protein belongs to the dicarboxylate/amino acid:cation symporter (DAACS) (TC 2.A.23) family.

The protein resides in the cell inner membrane. The catalysed reaction is L-serine(in) + Na(+)(in) = L-serine(out) + Na(+)(out). The enzyme catalyses L-threonine(in) + Na(+)(in) = L-threonine(out) + Na(+)(out). In terms of biological role, involved in the import of serine and threonine into the cell, with the concomitant import of sodium (symport system). In Campylobacter lari (strain RM2100 / D67 / ATCC BAA-1060), this protein is Serine/threonine transporter SstT.